The following is a 400-amino-acid chain: Acetate kinase (400 aa).

N10 contacts Mg(2+). K17 lines the ATP pocket. R91 lines the substrate pocket. The Proton donor/acceptor role is filled by D150. ATP-binding positions include 210–214, 285–287, and 333–337; these read HLGNG, DCR, and GIGEN. Mg(2+) is bound at residue E387.

It belongs to the acetokinase family. In terms of assembly, homodimer. Requires Mg(2+) as cofactor. It depends on Mn(2+) as a cofactor.

The protein localises to the cytoplasm. The enzyme catalyses acetate + ATP = acetyl phosphate + ADP. It functions in the pathway metabolic intermediate biosynthesis; acetyl-CoA biosynthesis; acetyl-CoA from acetate: step 1/2. Its function is as follows. Catalyzes the formation of acetyl phosphate from acetate and ATP. Can also catalyze the reverse reaction. This chain is Acetate kinase, found in Escherichia coli O157:H7.